Consider the following 186-residue polypeptide: ADP-ribosylation factor-like protein 8B (186 aa).

The note=Mediates targeting to membranes intramembrane region spans 1 to 19 (MLALISRLLDWFRSLFWKE). GTP is bound by residues 29–35 (QYSGKTT), 71–75 (DIGGQ), and 130–133 (NKRD). Lys141 is covalently cross-linked (Glycyl lysine isopeptide (Lys-Gly) (interchain with G-Cter in ubiquitin)).

Belongs to the small GTPase superfamily. Arf family. In terms of assembly, interacts with tubulin. Interacts with BORCS5; recruits ARL8B to lysosomes. Interacts with VPS41; the interaction mediates the recruitment of the HOPS complex to lysosomes. Interacts (GTP-bound form) with PLEKHM2 (via RUN domain); the interaction is required to recruit the motor protein kinesin-1 on lysosomes. Interacts (GTP-bound form) with PLEKHM1 (via RUN domain); the interaction is required for PLEKHM1 localization to lysosomes and for ARL8B function in delivery and degradation of endocytic and autophagic cargo in lysosomes. PLEKHM1 and PLEKHM2 compete for interaction with ARL8B. Interacts (GTP-bound form) with RUFY1; the interaction is required for RUFY1 endosomal location. When GTP-bound, interacts with RUFY3 and RUFY4, but not with RUFY1, nor RUFY2. Ubiquitinated at Lys-141 by RNF167, leading to its degradation.

Its subcellular location is the late endosome membrane. The protein localises to the lysosome membrane. It localises to the cytoplasm. The protein resides in the cytoskeleton. It is found in the spindle. Its subcellular location is the cell projection. The protein localises to the axon. It localises to the synapse. The protein resides in the cytolytic granule membrane. It is found in the early endosome membrane. It carries out the reaction GTP + H2O = GDP + phosphate + H(+). Small GTPase which cycles between active GTP-bound and inactive GDP-bound states. In its active state, binds to a variety of effector proteins playing a key role in the regulation of lysosomal positioning which is important for nutrient sensing, natural killer cell-mediated cytotoxicity and antigen presentation. Along with its effectors, orchestrates lysosomal transport and fusion. Localizes specifically to lysosomal membranes and mediates anterograde lysosomal motility by recruiting PLEKHM2, which in turn recruits the motor protein kinesin-1 on lysosomes. Required for lysosomal and cytolytic granule exocytosis. Critical factor involved in NK cell-mediated cytotoxicity. Drives the polarization of cytolytic granules and microtubule-organizing centers (MTOCs) toward the immune synapse between effector NK lymphocytes and target cells. In neurons, mediates the anterograde axonal long-range transport of presynaptic lysosome-related vesicles required for presynaptic biogenesis and synaptic function. Also acts as a regulator of endosome to lysosome trafficking pathways of special significance for host defense. Recruits RUFY1 onto early endosomes regulating endosomes to trans-Golgi network proteins retrieval. Regulates cargo trafficking to lysosomes by binding to PLEKHM1 and recruiting the HOPS subunit VPS41, resulting in functional assembly of the HOPS complex on lysosomal membranes. Plays an important role in cargo delivery to lysosomes for antigen presentation and microbial killing. Directs the intersection of CD1d with lipid antigens in lysosomes, and plays a role in intersecting phagosomes with lysosomes to generate phagolysosomes that kill microbes. Involved in the process of MHC II presentation. Regulates the delivery of antigens to lysosomes and the formation of MHC II-peptide complexes through the recruitment of the HOPS complex to lysosomes allowing the fusion of late endosomes to lysosomes. May play a role in chromosome segregation. The sequence is that of ADP-ribosylation factor-like protein 8B (ARL8B) from Bos taurus (Bovine).